Here is a 1634-residue protein sequence, read N- to C-terminus: Probable serine/threonine-protein kinase DDB_G0282895 (1634 aa).

The stretch at 40–63 (YKGNLNENKLKNGKGTFLFPNSIY) is one MORN 1 repeat. Positions 84–131 (QKIQKKSSQSKSQQQPPSQTKKSSSPINLSPRLQGQNPTITTNGSNNN) are disordered. Over residues 89–109 (KSSQSKSQQQPPSQTKKSSSP) the composition is skewed to low complexity. The segment covering 110-119 (INLSPRLQGQ) has biased composition (polar residues). The span at 120–131 (NPTITTNGSNNN) shows a compositional bias: low complexity. The MORN 2 repeat unit spans residues 169–191 (YNGKWINGKANGIGCFHFSKDDS). Composition is skewed to low complexity over residues 273-292 (SNNN…LSPT) and 318-339 (SGSG…PISS). Disordered regions lie at residues 273-367 (SNNN…QQQQ), 658-750 (TTAT…TFSV), and 783-816 (SSIL…NCGQ). The span at 340–351 (GLQHSKTQPNVS) shows a compositional bias: polar residues. 3 stretches are compositionally biased toward low complexity: residues 352 to 367 (QSQN…QQQQ), 658 to 688 (TTAT…TTTT), and 703 to 715 (PPSQ…SPSS). Over residues 716-732 (DQTNLPSIAISSSNGIS) the composition is skewed to polar residues. The span at 787-813 (NNNNNNNNNNNNNNNNNNNNNNNNNNN) shows a compositional bias: low complexity. Residues 1255–1275 (IFIGFMELCVIDELCGFSFIY) form a helical membrane-spanning segment. The 258-residue stretch at 1377 to 1634 (LQILQFLGEG…IIQKLCNHKC (258 aa)) folds into the Protein kinase domain. Residues 1383-1391 (LGEGALAEV) and Lys1404 each bind ATP. Asp1500 serves as the catalytic Proton acceptor.

This sequence belongs to the protein kinase superfamily. TKL Ser/Thr protein kinase family.

It is found in the membrane. The catalysed reaction is L-seryl-[protein] + ATP = O-phospho-L-seryl-[protein] + ADP + H(+). It carries out the reaction L-threonyl-[protein] + ATP = O-phospho-L-threonyl-[protein] + ADP + H(+). This chain is Probable serine/threonine-protein kinase DDB_G0282895, found in Dictyostelium discoideum (Social amoeba).